A 308-amino-acid chain; its full sequence is UDP-N-acetylenolpyruvoylglucosamine reductase (308 aa).

The 164-residue stretch at 22–185 (RVGGPADWLF…TEATFRAEAG (164 aa)) folds into the FAD-binding PCMH-type domain. The active site involves Arg165. A compositionally biased stretch (basic and acidic residues) spans 197–211 (QIARRDSSQPTKERS). The segment at 197 to 228 (QIARRDSSQPTKERSAGSTFRNPAGFSSTGRA) is disordered. Residues 212–226 (AGSTFRNPAGFSSTG) show a composition bias toward polar residues. Ser214 (proton donor) is an active-site residue. The active site involves Glu296.

The protein belongs to the MurB family. FAD serves as cofactor.

It is found in the cytoplasm. It carries out the reaction UDP-N-acetyl-alpha-D-muramate + NADP(+) = UDP-N-acetyl-3-O-(1-carboxyvinyl)-alpha-D-glucosamine + NADPH + H(+). It functions in the pathway cell wall biogenesis; peptidoglycan biosynthesis. In terms of biological role, cell wall formation. The chain is UDP-N-acetylenolpyruvoylglucosamine reductase from Cereibacter sphaeroides (strain ATCC 17023 / DSM 158 / JCM 6121 / CCUG 31486 / LMG 2827 / NBRC 12203 / NCIMB 8253 / ATH 2.4.1.) (Rhodobacter sphaeroides).